Reading from the N-terminus, the 84-residue chain is U21-theraphotoxin-Cg1b (84 aa).

The N-terminal stretch at 1 to 21 (MKVSVLITLAVLGVMFLLTSA) is a signal peptide. The propeptide occupies 22-47 (EERGSDQMDSPAWLKSMERIFQSEER). Disulfide bonds link C49-C63, C56-C68, and C62-C76. F82 bears the Phenylalanine amide mark.

It belongs to the neurotoxin 10 (Hwtx-1) family. 05 (F4a) subfamily. In terms of tissue distribution, expressed by the venom gland.

It localises to the secreted. In terms of biological role, probable ion channel inhibitor. This chain is U21-theraphotoxin-Cg1b, found in Chilobrachys guangxiensis (Chinese earth tiger tarantula).